We begin with the raw amino-acid sequence, 441 residues long: tRNA(Ile)-lysidine synthase (441 aa).

Residue 27 to 32 participates in ATP binding; it reads SGGVDS.

The protein belongs to the tRNA(Ile)-lysidine synthase family.

It is found in the cytoplasm. It carries out the reaction cytidine(34) in tRNA(Ile2) + L-lysine + ATP = lysidine(34) in tRNA(Ile2) + AMP + diphosphate + H(+). In terms of biological role, ligates lysine onto the cytidine present at position 34 of the AUA codon-specific tRNA(Ile) that contains the anticodon CAU, in an ATP-dependent manner. Cytidine is converted to lysidine, thus changing the amino acid specificity of the tRNA from methionine to isoleucine. This Proteus mirabilis (strain HI4320) protein is tRNA(Ile)-lysidine synthase.